The chain runs to 1104 residues: Carbamoyl phosphate synthase large chain (1104 aa).

The carboxyphosphate synthetic domain stretch occupies residues 1–403 (MPRRQDIQKI…SFQKALRSLE (403 aa)). 12 residues coordinate ATP: Arg129, Arg170, Gly176, Gly177, Gln209, Leu211, Glu216, Gly242, Ile243, His244, Gln286, and Glu300. The ATP-grasp 1 domain maps to 133–329 (NEAMDKIGVK…IAKMAAKLAV (197 aa)). Mg(2+)-binding residues include Gln286, Glu300, and Asn302. Positions 286, 300, and 302 each coordinate Mn(2+). The segment at 404 to 552 (TGRAGWGCDK…YSTYEEETEV (149 aa)) is oligomerization domain. Residues 553–966 (IPASKPKVMI…AFAKAELGAG (414 aa)) form a carbamoyl phosphate synthetic domain region. Residues 703 to 900 (EKILQKLNIS…LAKLASLIMS (198 aa)) form the ATP-grasp 2 domain. 10 residues coordinate ATP: Arg739, Lys778, Leu780, Glu785, Gly811, Ile812, His813, Ser814, Gln854, and Glu871. Gln854, Glu871, and Asn873 together coordinate Mg(2+). Positions 854, 871, and 873 each coordinate Mn(2+). Residues 967–1104 (ERLPLTGTVF…KTIQEYCPNF (138 aa)) enclose the MGS-like domain. Positions 967–1104 (ERLPLTGTVF…KTIQEYCPNF (138 aa)) are allosteric domain.

The protein belongs to the CarB family. Composed of two chains; the small (or glutamine) chain promotes the hydrolysis of glutamine to ammonia, which is used by the large (or ammonia) chain to synthesize carbamoyl phosphate. Tetramer of heterodimers (alpha,beta)4. Mg(2+) serves as cofactor. Requires Mn(2+) as cofactor.

The enzyme catalyses hydrogencarbonate + L-glutamine + 2 ATP + H2O = carbamoyl phosphate + L-glutamate + 2 ADP + phosphate + 2 H(+). It catalyses the reaction hydrogencarbonate + NH4(+) + 2 ATP = carbamoyl phosphate + 2 ADP + phosphate + 2 H(+). Its pathway is amino-acid biosynthesis; L-arginine biosynthesis; carbamoyl phosphate from bicarbonate: step 1/1. It functions in the pathway pyrimidine metabolism; UMP biosynthesis via de novo pathway; (S)-dihydroorotate from bicarbonate: step 1/3. In terms of biological role, large subunit of the glutamine-dependent carbamoyl phosphate synthetase (CPSase). CPSase catalyzes the formation of carbamoyl phosphate from the ammonia moiety of glutamine, carbonate, and phosphate donated by ATP, constituting the first step of 2 biosynthetic pathways, one leading to arginine and/or urea and the other to pyrimidine nucleotides. The large subunit (synthetase) binds the substrates ammonia (free or transferred from glutamine from the small subunit), hydrogencarbonate and ATP and carries out an ATP-coupled ligase reaction, activating hydrogencarbonate by forming carboxy phosphate which reacts with ammonia to form carbamoyl phosphate. This is Carbamoyl phosphate synthase large chain from Nostoc sp. (strain PCC 7120 / SAG 25.82 / UTEX 2576).